The following is a 166-amino-acid chain: Crossover junction endodeoxyribonuclease RuvC (166 aa).

Active-site residues include Asp-11, Glu-71, and Asp-142. Mg(2+) contacts are provided by Asp-11, Glu-71, and Asp-142.

It belongs to the RuvC family. As to quaternary structure, homodimer which binds Holliday junction (HJ) DNA. The HJ becomes 2-fold symmetrical on binding to RuvC with unstacked arms; it has a different conformation from HJ DNA in complex with RuvA. In the full resolvosome a probable DNA-RuvA(4)-RuvB(12)-RuvC(2) complex forms which resolves the HJ. It depends on Mg(2+) as a cofactor.

The protein localises to the cytoplasm. It carries out the reaction Endonucleolytic cleavage at a junction such as a reciprocal single-stranded crossover between two homologous DNA duplexes (Holliday junction).. In terms of biological role, the RuvA-RuvB-RuvC complex processes Holliday junction (HJ) DNA during genetic recombination and DNA repair. Endonuclease that resolves HJ intermediates. Cleaves cruciform DNA by making single-stranded nicks across the HJ at symmetrical positions within the homologous arms, yielding a 5'-phosphate and a 3'-hydroxyl group; requires a central core of homology in the junction. The consensus cleavage sequence is 5'-(A/T)TT(C/G)-3'. Cleavage occurs on the 3'-side of the TT dinucleotide at the point of strand exchange. HJ branch migration catalyzed by RuvA-RuvB allows RuvC to scan DNA until it finds its consensus sequence, where it cleaves and resolves the cruciform DNA. The chain is Crossover junction endodeoxyribonuclease RuvC from Maricaulis maris (strain MCS10) (Caulobacter maris).